The chain runs to 180 residues: Large ribosomal subunit protein uL5 (180 aa).

The protein belongs to the universal ribosomal protein uL5 family. In terms of assembly, part of the 50S ribosomal subunit; part of the 5S rRNA/L5/L18/L25 subcomplex. Contacts the 5S rRNA and the P site tRNA. Forms a bridge to the 30S subunit in the 70S ribosome.

This is one of the proteins that bind and probably mediate the attachment of the 5S RNA into the large ribosomal subunit, where it forms part of the central protuberance. In the 70S ribosome it contacts protein S13 of the 30S subunit (bridge B1b), connecting the 2 subunits; this bridge is implicated in subunit movement. Contacts the P site tRNA; the 5S rRNA and some of its associated proteins might help stabilize positioning of ribosome-bound tRNAs. This Clostridium acetobutylicum (strain ATCC 824 / DSM 792 / JCM 1419 / IAM 19013 / LMG 5710 / NBRC 13948 / NRRL B-527 / VKM B-1787 / 2291 / W) protein is Large ribosomal subunit protein uL5.